A 2628-amino-acid polypeptide reads, in one-letter code: Hemagglutinin A (2628 aa).

Residues 1-24 form the signal peptide; the sequence is MRKLNSLFSLAVLLSLLCWGQTAA. Peptidase C25-like regions lie at residues 25–539, 540–995, 996–1451, 1452–1907, and 2074–2628; these read AQGG…TPPP, GGTS…TPPP, and IDAD…LAVK. Disordered regions lie at residues 493 to 512, 520 to 546, 944 to 1002, 1400 to 1458, 1856 to 1881, 1890 to 1909, and 2336 to 2358; these read WDAP…LSES, SWKT…SFAG, KWDA…SFAG, KWDA…SESF, KTID…PPGG, and SSWK…PPGG. Residues 496–508 show a composition bias toward low complexity; sequence PNGTPNPNPGTTT.

The protein belongs to the peptidase C25 family.

Agglutinates erythrocytes. The chain is Hemagglutinin A (hagA) from Porphyromonas gingivalis (Bacteroides gingivalis).